The following is a 479-amino-acid chain: MTVNTFDPSKASPVTHASDSASKTPEPNAVAAPSSELGNRVGFVSLGCPKALVDSERILTQLKLDGYDVVPSYNDADVVVVNTCGFIDSAKQESLDAIGEAMKENGKVIVTGCMGKGNDAQVIKETYPNVLSVTGPAAYEEVMGAVHGYIPPKKEHNPLIDLVPPQGVKLTPRHYAYLKISEGCNHRCTFCIIPDMRGDLVSRPIGDVLGEAERLVAAGTKEILVISQDTSAYGVDVKYRTGFWQGRPVKTRMLEMCEALGELGAWVRLHYVYPYPHVDNVIPLMAEGKILPYLDIPFQHASPQVLKNMRRPAHQEKTLERLAKWREMCPELVLRSTFVVGFPGETEQDFQILLDWLQEAQLDRVGCFEYSPVEGAKANALPNHVPDEVKRERWERFMETQQAISAAKLKQKVGYEMDVIIDSIDGDIATGRTYADAPEIDGVVTFSGAAGMKVGEFSAVEITGSDDYDLTGIAVEDEQ.

A disordered region spans residues 1 to 34; the sequence is MTVNTFDPSKASPVTHASDSASKTPEPNAVAAPS. Residues 15 to 25 are compositionally biased toward polar residues; sequence THASDSASKTP. Residues 39 to 151 enclose the MTTase N-terminal domain; sequence NRVGFVSLGC…VMGAVHGYIP (113 aa). [4Fe-4S] cluster is bound by residues Cys-48, Cys-84, Cys-113, Cys-184, Cys-188, and Cys-191. The 238-residue stretch at 170-407 folds into the Radical SAM core domain; it reads LTPRHYAYLK…METQQAISAA (238 aa). In terms of domain architecture, TRAM spans 410 to 476; sequence KQKVGYEMDV…DYDLTGIAVE (67 aa).

Belongs to the methylthiotransferase family. RimO subfamily. [4Fe-4S] cluster serves as cofactor.

The protein resides in the cytoplasm. The enzyme catalyses L-aspartate(89)-[ribosomal protein uS12]-hydrogen + (sulfur carrier)-SH + AH2 + 2 S-adenosyl-L-methionine = 3-methylsulfanyl-L-aspartate(89)-[ribosomal protein uS12]-hydrogen + (sulfur carrier)-H + 5'-deoxyadenosine + L-methionine + A + S-adenosyl-L-homocysteine + 2 H(+). Its function is as follows. Catalyzes the methylthiolation of an aspartic acid residue of ribosomal protein uS12. This chain is Ribosomal protein uS12 methylthiotransferase RimO, found in Saccharophagus degradans (strain 2-40 / ATCC 43961 / DSM 17024).